Reading from the N-terminus, the 303-residue chain is MLDEYKLTHLKQLEAESIHIIREVAAEFDNPVMLYSIGKDSAVMLHLAMKAFAPGKPPFPLMHVDTTWKFKEMIEFRDKYVKELGLELIVHSNQEGIDMGISPFVHGSAKHTDIMKTQALKQALDKHGFDAAFGGARRDEEKSRAKERVYSFRDKKHRWDPKNQRPELWNIYNSRVDKGESIRVFPLSNWTELDIWQYIHLESIPLVPLYFAAKRPVVERDGTLIMVDDDRMPIEPGEKVEEKMVRFRTLGCYPLTGAVESEATTLPEIIQEMLLTTTSERQGRVIDHDSSGSMEKKKQEGYF.

The tract at residues 281 to 303 (RQGRVIDHDSSGSMEKKKQEGYF) is disordered.

Belongs to the PAPS reductase family. CysD subfamily. In terms of assembly, heterodimer composed of CysD, the smaller subunit, and CysN.

The catalysed reaction is sulfate + ATP + H(+) = adenosine 5'-phosphosulfate + diphosphate. The protein operates within sulfur metabolism; hydrogen sulfide biosynthesis; sulfite from sulfate: step 1/3. Its function is as follows. With CysN forms the ATP sulfurylase (ATPS) that catalyzes the adenylation of sulfate producing adenosine 5'-phosphosulfate (APS) and diphosphate, the first enzymatic step in sulfur assimilation pathway. APS synthesis involves the formation of a high-energy phosphoric-sulfuric acid anhydride bond driven by GTP hydrolysis by CysN coupled to ATP hydrolysis by CysD. The chain is Sulfate adenylyltransferase subunit 2 from Saccharophagus degradans (strain 2-40 / ATCC 43961 / DSM 17024).